Here is a 476-residue protein sequence, read N- to C-terminus: Glycogen synthase (476 aa).

K15 provides a ligand contact to ADP-alpha-D-glucose.

This sequence belongs to the glycosyltransferase 1 family. Bacterial/plant glycogen synthase subfamily.

The catalysed reaction is [(1-&gt;4)-alpha-D-glucosyl](n) + ADP-alpha-D-glucose = [(1-&gt;4)-alpha-D-glucosyl](n+1) + ADP + H(+). It functions in the pathway glycan biosynthesis; glycogen biosynthesis. Synthesizes alpha-1,4-glucan chains using ADP-glucose. The polypeptide is Glycogen synthase (Streptococcus sanguinis (strain SK36)).